A 31-amino-acid polypeptide reads, in one-letter code: Cyclotide cter-R (31 aa).

A cross-link (cyclopeptide (Gly-Asn)) is located at residues 1–31; the sequence is GIPCGESCVFIPCTVTALLGCSCKDKVCYKN. 3 cysteine pairs are disulfide-bonded: Cys4-Cys21, Cys8-Cys23, and Cys13-Cys28.

This is a cyclic peptide.

It is found in the secreted. Its function is as follows. Probably participates in a plant defense mechanism. The polypeptide is Cyclotide cter-R (Clitoria ternatea (Butterfly pea)).